Reading from the N-terminus, the 450-residue chain is Sorting nexin-4 (450 aa).

Met1 carries the N-acetylmethionine modification. Residues Met1–Phe53 form a disordered region. The span at Glu33–Gly42 shows a compositional bias: basic and acidic residues. Positions Ser61–Trp187 constitute a PX domain. Positions 106, 108, 132, and 154 each coordinate a 1,2-diacyl-sn-glycero-3-phospho-(1D-myo-inositol-3-phosphate).

Belongs to the sorting nexin family. In terms of assembly, heterodimer; heterodimerizes with SNX7 or SNX30. Interacts with WWC1/KIBRA. Identified in a complex with WWC1/KIBRA and dynein components DYNLL1 and DYNC1I2. Interacts with BIN1.

Its subcellular location is the early endosome. The protein localises to the early endosome membrane. Its function is as follows. Involved in the regulation of endocytosis and in several stages of intracellular trafficking. Plays a role in recycling endocytosed transferrin receptor and prevent its degradation. Involved in autophagosome assembly by regulating trafficking and recycling of phospholipid scramblase ATG9A. The chain is Sorting nexin-4 from Bos taurus (Bovine).